Consider the following 308-residue polypeptide: Inosose dehydratase (308 aa).

Belongs to the IolE/MocC family. Glutathione is required as a cofactor. The cofactor is Co(2+). It depends on Mn(2+) as a cofactor.

The catalysed reaction is scyllo-inosose = 3D-3,5/4-trihydroxycyclohexane-1,2-dione + H2O. Its pathway is polyol metabolism; myo-inositol degradation into acetyl-CoA; acetyl-CoA from myo-inositol: step 2/7. Its function is as follows. Catalyzes the dehydration of inosose (2-keto-myo-inositol, 2KMI or 2,4,6/3,5-pentahydroxycyclohexanone) to 3D-(3,5/4)-trihydroxycyclohexane-1,2-dione (D-2,3-diketo-4-deoxy-epi-inositol). The sequence is that of Inosose dehydratase from Geobacillus kaustophilus (strain HTA426).